Consider the following 155-residue polypeptide: Large ribosomal subunit protein eL24 (155 aa).

Residues 94–129 (RSLKPEVRKAQRDEKKKADKEKKKADKAARKSEKAK) show a composition bias toward basic and acidic residues. The disordered stretch occupies residues 94–155 (RSLKPEVRKA…AFQKVAATSR (62 aa)).

This sequence belongs to the eukaryotic ribosomal protein eL24 family.

The polypeptide is Large ribosomal subunit protein eL24 (RPL24) (Kluyveromyces lactis (strain ATCC 8585 / CBS 2359 / DSM 70799 / NBRC 1267 / NRRL Y-1140 / WM37) (Yeast)).